The primary structure comprises 359 residues: Guanine nucleotide-binding protein subunit alpha-11 (359 aa).

S-palmitoyl cysteine attachment occurs at residues Cys-9 and Cys-10. Positions 38 to 359 constitute a G-alpha domain; sequence RELKLLLLGT…QHNLKEYNLV (322 aa). The tract at residues 41–54 is G1 motif; it reads KLLLLGTGESGKST. GTP is bound by residues 46–53 and 180–183; these read GTGESGKS and LRVR. Position 53 (Ser-53) interacts with Mg(2+). Residues 178-186 are G2 motif; it reads DVLRVRVPT. Thr-186 is a Mg(2+) binding site. Positions 201-210 are G3 motif; that stretch reads FRMVDVGGQR. The G4 motif stretch occupies residues 270–277; the sequence is ILFLNKKD. Residues 274–277 and Ala-331 each bind GTP; that span reads NKKD. Positions 329–334 are G5 motif; sequence TCATDT.

It belongs to the G-alpha family. G(q) subfamily. As to quaternary structure, g proteins are composed of 3 units; alpha, beta and gamma. The alpha chain contains the guanine nucleotide binding site.

Its subcellular location is the cell membrane. The protein localises to the cytoplasm. It carries out the reaction GTP + H2O = GDP + phosphate + H(+). Guanine nucleotide-binding proteins (G proteins) function as transducers downstream of G protein-coupled receptors (GPCRs) in numerous signaling cascades. The alpha chain contains the guanine nucleotide binding site and alternates between an active, GTP-bound state and an inactive, GDP-bound state. Signaling by an activated GPCR promotes GDP release and GTP binding. The alpha subunit has a low GTPase activity that converts bound GTP to GDP, thereby terminating the signal. Both GDP release and GTP hydrolysis are modulated by numerous regulatory proteins. Signaling is mediated via phospholipase C-beta-dependent inositol lipid hydrolysis for signal propagation: activates phospholipase C-beta: following GPCR activation, GNA11 activates PLC-beta (PLCB1, PLCB2, PLCB3 or PLCB4), leading to production of diacylglycerol (DAG) and inositol 1,4,5-trisphosphate (IP3). This chain is Guanine nucleotide-binding protein subunit alpha-11 (gna11), found in Xenopus laevis (African clawed frog).